A 498-amino-acid polypeptide reads, in one-letter code: NAD(P)H-quinone oxidoreductase chain 4, chloroplastic (498 aa).

The next 14 helical transmembrane spans lie at Leu-4–Leu-24, Leu-37–Leu-57, Met-87–Val-107, Val-111–Ser-131, Ile-134–Met-154, Phe-167–Leu-187, Ile-207–Ile-227, His-242–Ile-262, Phe-274–Ile-294, Ile-305–Asp-325, Ala-331–Ile-351, Leu-386–Thr-406, Ile-417–Leu-437, and Ile-461–Val-481.

This sequence belongs to the complex I subunit 4 family.

It is found in the plastid. The protein localises to the chloroplast thylakoid membrane. It catalyses the reaction a plastoquinone + NADH + (n+1) H(+)(in) = a plastoquinol + NAD(+) + n H(+)(out). It carries out the reaction a plastoquinone + NADPH + (n+1) H(+)(in) = a plastoquinol + NADP(+) + n H(+)(out). This Psilotum nudum (Whisk fern) protein is NAD(P)H-quinone oxidoreductase chain 4, chloroplastic.